The chain runs to 493 residues: Glutathione hydrolase 6 (493 aa).

The Cytoplasmic segment spans residues 1–54 (MERAEEPVVYQKLLPWEPSLESEEEVEEEETSEALVLNPRRHQDSSRNKAGGLP). Positions 19–52 (SLESEEEVEEEETSEALVLNPRRHQDSSRNKAGG) are disordered. The span at 20 to 32 (LESEEEVEEEETS) shows a compositional bias: acidic residues. Residues 55 to 75 (GTWARVVAALLLLAVGCSLAV) form a helical; Signal-anchor for type II membrane protein membrane-spanning segment. Over 76-493 (RQLQNQGRST…PHACCPFQGF (418 aa)) the chain is Extracellular. Positions 83 to 105 (RSTGSLGSVAPPPGGHSHGPGVY) are disordered. 2 N-linked (GlcNAc...) asparagine glycosylation sites follow: Asn161 and Asn370. The span at 442–455 (PPTQAQHQHQGQQE) shows a compositional bias: low complexity. The interval 442–464 (PPTQAQHQHQGQQEPTEHPSTCG) is disordered.

It belongs to the gamma-glutamyltransferase family. Heterodimer composed of the light and heavy chains. The active site is located in the light chain. Post-translationally, cleaved by autocatalysis into a large and a small subunit and the autocatalytic cleavage is essential to the functional activation of the enzyme.

Its subcellular location is the membrane. The catalysed reaction is an N-terminal (5-L-glutamyl)-[peptide] + an alpha-amino acid = 5-L-glutamyl amino acid + an N-terminal L-alpha-aminoacyl-[peptide]. It catalyses the reaction glutathione + H2O = L-cysteinylglycine + L-glutamate. The enzyme catalyses an S-substituted glutathione + H2O = an S-substituted L-cysteinylglycine + L-glutamate. The protein operates within sulfur metabolism; glutathione metabolism. Functionally, hydrolyzes and transfers gamma-glutamyl moieties from glutathione and other gamma-glutamyl compounds to acceptors. This chain is Glutathione hydrolase 6, found in Homo sapiens (Human).